We begin with the raw amino-acid sequence, 113 residues long: Mini zinc finger protein 2 (113 aa).

The segment at Tyr24–Val83 adopts a ZF-HD dimerization-type; degenerate zinc-finger fold. The disordered stretch occupies residues Asp93–Glu113. Over residues Ser100–Glu113 the composition is skewed to low complexity.

Homo- and heterodimers.

It is found in the cytoplasm. Functionally, inhibits zinc finger homeodomain (ZHD) transcription factors, by interacting with them to prevent both their nuclear localization and their DNA-binding properties. In Oryza sativa subsp. japonica (Rice), this protein is Mini zinc finger protein 2 (MIF3).